We begin with the raw amino-acid sequence, 78 residues long: Translational regulator CsrA (78 aa).

Belongs to the CsrA/RsmA family. Homodimer; the beta-strands of each monomer intercalate to form a hydrophobic core, while the alpha-helices form wings that extend away from the core.

It is found in the cytoplasm. A translational regulator that binds mRNA to regulate translation initiation and/or mRNA stability. Usually binds in the 5'-UTR at or near the Shine-Dalgarno sequence preventing ribosome-binding, thus repressing translation. Its main target seems to be the major flagellin gene, while its function is anatagonized by FliW. This is Translational regulator CsrA from Nitratidesulfovibrio vulgaris (strain ATCC 29579 / DSM 644 / CCUG 34227 / NCIMB 8303 / VKM B-1760 / Hildenborough) (Desulfovibrio vulgaris).